The primary structure comprises 62 residues: Photosystem II reaction center protein Z (62 aa).

The next 2 membrane-spanning stretches (helical) occupy residues 8–28 and 41–61; these read ALAA…VAYA and FLGS…NFLV.

This sequence belongs to the PsbZ family. PSII is composed of 1 copy each of membrane proteins PsbA, PsbB, PsbC, PsbD, PsbE, PsbF, PsbH, PsbI, PsbJ, PsbK, PsbL, PsbM, PsbT, PsbX, PsbY, PsbZ, Psb30/Ycf12, peripheral proteins PsbO, CyanoQ (PsbQ), PsbU, PsbV and a large number of cofactors. It forms dimeric complexes.

It is found in the cellular thylakoid membrane. Functionally, may control the interaction of photosystem II (PSII) cores with the light-harvesting antenna, regulates electron flow through the 2 photosystem reaction centers. PSII is a light-driven water plastoquinone oxidoreductase, using light energy to abstract electrons from H(2)O, generating a proton gradient subsequently used for ATP formation. This chain is Photosystem II reaction center protein Z, found in Cyanothece sp. (strain PCC 7425 / ATCC 29141).